The primary structure comprises 409 residues: Tryptophan synthase beta chain (409 aa).

Lys-95 carries the post-translational modification N6-(pyridoxal phosphate)lysine.

Belongs to the TrpB family. As to quaternary structure, tetramer of two alpha and two beta chains. Pyridoxal 5'-phosphate serves as cofactor.

The catalysed reaction is (1S,2R)-1-C-(indol-3-yl)glycerol 3-phosphate + L-serine = D-glyceraldehyde 3-phosphate + L-tryptophan + H2O. It functions in the pathway amino-acid biosynthesis; L-tryptophan biosynthesis; L-tryptophan from chorismate: step 5/5. Functionally, the beta subunit is responsible for the synthesis of L-tryptophan from indole and L-serine. The chain is Tryptophan synthase beta chain from Pseudomonas savastanoi pv. phaseolicola (Pseudomonas syringae pv. phaseolicola).